The chain runs to 197 residues: dCTP deaminase, dUMP-forming (197 aa).

Residues R105–R110, D123, T131–E133, Q152, Y166, K174, and Q178 each bind dCTP. E133 acts as the Proton donor/acceptor in catalysis. Residues P161–T183 form a disordered region. Residues P165–K174 are compositionally biased toward basic and acidic residues.

Belongs to the dCTP deaminase family. Homotrimer.

The catalysed reaction is dCTP + 2 H2O = dUMP + NH4(+) + diphosphate. It functions in the pathway pyrimidine metabolism; dUMP biosynthesis; dUMP from dCTP: step 1/1. Functionally, bifunctional enzyme that catalyzes both the deamination of dCTP to dUTP and the hydrolysis of dUTP to dUMP without releasing the toxic dUTP intermediate. In Methanothermobacter thermautotrophicus (strain ATCC 29096 / DSM 1053 / JCM 10044 / NBRC 100330 / Delta H) (Methanobacterium thermoautotrophicum), this protein is dCTP deaminase, dUMP-forming.